The chain runs to 839 residues: MGLLEKIFGTYSDREVKRIIPLVDKIDALDGSMQALSEDELKAKTAEFKQRYENGETLDDLLVEAFAVVREASSRILGLKHFREQIIGGIVLHQGRISEMKTGEGKTLVATLPSYLNAITGKGVHVVTVNDYLAKRDMEWMGQLYQYLGLTTGVIVHDLDQKQRQEAYAADITYGTNNEFGFDYLRDNMVIYKEERVQRPLHFCIVDEVDSILIDEARTPLIISGEGEKSTEFYKVADNFAKMLRKEKDFTIDEKTNSAILTDEGVEKAEKYYHIDNYADPQNMEIQHHTSQALKANYLMKRDKDYMVKEDEVVIVDEFTGRLMEGRRYSDGLHQAIEAKEGVKVQKESKTLATITFQNYFRMYEKLSGMTGTALTEEVEFREIYGLDVVVIPTHRPIARIDAPDIVYKTELGKFKAVVEDIVETNKNGQPVLVGTVSIEKSELLSSLLKKRGVRHQVLNAKYHEQEAEIISHAGEKGMVTIATNMAGRGTDIKLGEGVTDVGGLKIIGTERHESRRIDNQLRGRAGRQGDKGYSRFYVSLEDDLMRIFGSDKLKNMVEKLGLGDDDAIESKMVSSAIENAQKKVEGNNFDIRKTLIQYDDVMNKQREIIYKQRSEVLEGENLKDQIEGMIKDLIYNAVNSHISGVDEELESDIEAILNYLDDICLPRGIVEVEELATMSNDEIKEKLYSLAKEIYERKEEEFSSDQMRELERVILLRVVDTKWMDHIDSMEHLKQGIGLRAYKQQDPTQAYQMEGSDMFEEMVENIKVETVRYLFHVQAERAPERQRVVKETEINYSGPDAGDTKKEPVRRKEKKIGRNDLCPCGSGKKYKDCCGRRA.

Residues glutamine 85, 103–107 (GEGKT), and aspartate 492 each bind ATP. The segment at 794–820 (EINYSGPDAGDTKKEPVRRKEKKIGRN) is disordered. Positions 823, 825, 834, and 835 each coordinate Zn(2+).

It belongs to the SecA family. In terms of assembly, monomer and homodimer. Part of the essential Sec protein translocation apparatus which comprises SecA, SecYEG and auxiliary proteins SecDF. Other proteins may also be involved. It depends on Zn(2+) as a cofactor.

It is found in the cell membrane. It localises to the cytoplasm. It carries out the reaction ATP + H2O + cellular proteinSide 1 = ADP + phosphate + cellular proteinSide 2.. Part of the Sec protein translocase complex. Interacts with the SecYEG preprotein conducting channel. Has a central role in coupling the hydrolysis of ATP to the transfer of proteins into and across the cell membrane, serving as an ATP-driven molecular motor driving the stepwise translocation of polypeptide chains across the membrane. The chain is Protein translocase subunit SecA from Clostridium acetobutylicum (strain ATCC 824 / DSM 792 / JCM 1419 / IAM 19013 / LMG 5710 / NBRC 13948 / NRRL B-527 / VKM B-1787 / 2291 / W).